Consider the following 137-residue polypeptide: MLQPKRTKFRKQHKGRIHGEAKGGFLLNFGGFGLKATEPERVTARQIEAARRAITRHMKRQGRVWIRIFPDTPVTSKPTEVRMGKGKGSVDFWAAKVKPGRIMFEIDGVSETIAREALRLGAMKLPITTRIVVREDW.

Belongs to the universal ribosomal protein uL16 family. Part of the 50S ribosomal subunit.

In terms of biological role, binds 23S rRNA and is also seen to make contacts with the A and possibly P site tRNAs. The protein is Large ribosomal subunit protein uL16 of Cereibacter sphaeroides (strain ATCC 17025 / ATH 2.4.3) (Rhodobacter sphaeroides).